The chain runs to 88 residues: Protein LE25 (88 aa).

Residues 1-88 (MQTGKDAASA…YGATGNHTTF (88 aa)) form a disordered region. Residues 14–65 (GMEKTKANVQEKAERMTTRDPLKKEMATEKKEDRVAAAEMGKRDAKAQHAAE) are compositionally biased toward basic and acidic residues.

The protein belongs to the LEA type 1 family. As to expression, accumulates in developing seeds and drought-stressed leaves.

This Solanum lycopersicum (Tomato) protein is Protein LE25 (LE25).